The sequence spans 326 residues: Putative HTH-type transcriptional regulatory protein MmarC5_0898 (326 aa).

The region spanning 128-183 (LRETREKLKISVGELAEISRVSRKTIYKYEQNEANPSAEVAIKIEEYLDVPLIKGI) is the HTH cro/C1-type domain. A DNA-binding region (H-T-H motif) is located at residues 139 to 158 (VGELAEISRVSRKTIYKYEQ).

The sequence is that of Putative HTH-type transcriptional regulatory protein MmarC5_0898 from Methanococcus maripaludis (strain C5 / ATCC BAA-1333).